The chain runs to 178 residues: NADH-quinone oxidoreductase subunit B (178 aa).

[4Fe-4S] cluster contacts are provided by cysteine 45, cysteine 46, cysteine 111, and cysteine 140.

The protein belongs to the complex I 20 kDa subunit family. In terms of assembly, NDH-1 is composed of 15 different subunits. Subunits NuoB, C, D, E, F, and G constitute the peripheral sector of the complex. [4Fe-4S] cluster serves as cofactor.

The protein resides in the cell membrane. The enzyme catalyses a quinone + NADH + 5 H(+)(in) = a quinol + NAD(+) + 4 H(+)(out). In terms of biological role, NDH-1 shuttles electrons from NADH, via FMN and iron-sulfur (Fe-S) centers, to quinones in the respiratory chain. The immediate electron acceptor for the enzyme in this species is believed to be a menaquinone. Couples the redox reaction to proton translocation (for every two electrons transferred, four hydrogen ions are translocated across the cytoplasmic membrane), and thus conserves the redox energy in a proton gradient. The polypeptide is NADH-quinone oxidoreductase subunit B (Deinococcus deserti (strain DSM 17065 / CIP 109153 / LMG 22923 / VCD115)).